We begin with the raw amino-acid sequence, 563 residues long: UvrABC system protein C (563 aa).

The region spanning 12 to 87 is the GIY-YIG domain; that stretch reads NKSGVYIFKK…IYKYKPKYNA (76 aa). In terms of domain architecture, UVR spans 194-229; that stretch reads SNVISFIKLKMEQHARLLDFENAAKYRDILLNFNKV.

It belongs to the UvrC family. In terms of assembly, interacts with UvrB in an incision complex.

It localises to the cytoplasm. In terms of biological role, the UvrABC repair system catalyzes the recognition and processing of DNA lesions. UvrC both incises the 5' and 3' sides of the lesion. The N-terminal half is responsible for the 3' incision and the C-terminal half is responsible for the 5' incision. The polypeptide is UvrABC system protein C (Fervidobacterium nodosum (strain ATCC 35602 / DSM 5306 / Rt17-B1)).